Consider the following 209-residue polypeptide: Orotate phosphoribosyltransferase (209 aa).

Residues Arg-96, Lys-100, His-102, and 122–130 contribute to the 5-phospho-alpha-D-ribose 1-diphosphate site; that span reads EDLISTGGS. Position 126 (Ser-126) interacts with orotate.

The protein belongs to the purine/pyrimidine phosphoribosyltransferase family. PyrE subfamily. In terms of assembly, homodimer. Mg(2+) serves as cofactor.

The catalysed reaction is orotidine 5'-phosphate + diphosphate = orotate + 5-phospho-alpha-D-ribose 1-diphosphate. It functions in the pathway pyrimidine metabolism; UMP biosynthesis via de novo pathway; UMP from orotate: step 1/2. Its function is as follows. Catalyzes the transfer of a ribosyl phosphate group from 5-phosphoribose 1-diphosphate to orotate, leading to the formation of orotidine monophosphate (OMP). This Streptococcus gordonii (strain Challis / ATCC 35105 / BCRC 15272 / CH1 / DL1 / V288) protein is Orotate phosphoribosyltransferase.